A 426-amino-acid chain; its full sequence is D-tagatose-1,6-bisphosphate aldolase subunit KbaZ (426 aa).

The protein belongs to the GatZ/KbaZ family. KbaZ subfamily. In terms of assembly, forms a complex with KbaY.

It functions in the pathway carbohydrate metabolism; D-tagatose 6-phosphate degradation; D-glyceraldehyde 3-phosphate and glycerone phosphate from D-tagatose 6-phosphate: step 2/2. Component of the tagatose-1,6-bisphosphate aldolase KbaYZ that is required for full activity and stability of the Y subunit. Could have a chaperone-like function for the proper and stable folding of KbaY. When expressed alone, KbaZ does not show any aldolase activity. This Escherichia coli O157:H7 protein is D-tagatose-1,6-bisphosphate aldolase subunit KbaZ.